The primary structure comprises 373 residues: Transaldolase (373 aa).

Lys143 acts as the Schiff-base intermediate with substrate in catalysis.

The protein belongs to the transaldolase family. Type 2 subfamily.

Its subcellular location is the cytoplasm. The catalysed reaction is D-sedoheptulose 7-phosphate + D-glyceraldehyde 3-phosphate = D-erythrose 4-phosphate + beta-D-fructose 6-phosphate. The protein operates within carbohydrate degradation; pentose phosphate pathway; D-glyceraldehyde 3-phosphate and beta-D-fructose 6-phosphate from D-ribose 5-phosphate and D-xylulose 5-phosphate (non-oxidative stage): step 2/3. In terms of biological role, transaldolase is important for the balance of metabolites in the pentose-phosphate pathway. The polypeptide is Transaldolase (tal) (Mycobacterium tuberculosis (strain ATCC 25618 / H37Rv)).